Consider the following 197-residue polypeptide: Probable GTP-binding protein EngB (197 aa).

The EngB-type G domain occupies 2-186; sequence KVKEVIFAGR…KRDLKQYLLS (185 aa). Residues 10–17, 35–39, 52–55, 132–135, and 166–168 contribute to the GTP site; these read GRSNVGKS, GTTIR, DLPG, NKMD, and VCA. Mg(2+) contacts are provided by serine 17 and threonine 37.

It belongs to the TRAFAC class TrmE-Era-EngA-EngB-Septin-like GTPase superfamily. EngB GTPase family. Mg(2+) is required as a cofactor.

Its function is as follows. Necessary for normal cell division and for the maintenance of normal septation. The polypeptide is Probable GTP-binding protein EngB (Archaeoglobus fulgidus (strain ATCC 49558 / DSM 4304 / JCM 9628 / NBRC 100126 / VC-16)).